We begin with the raw amino-acid sequence, 840 residues long: Protein translocase subunit SecA (840 aa).

Residues Gln-89, 107–111, and Asp-514 each bind ATP; that span reads GEGKT.

It belongs to the SecA family. Monomer and homodimer. Part of the essential Sec protein translocation apparatus which comprises SecA, SecYEG and auxiliary proteins SecDF-YajC and YidC.

Its subcellular location is the cell inner membrane. The protein localises to the cytoplasm. The enzyme catalyses ATP + H2O + cellular proteinSide 1 = ADP + phosphate + cellular proteinSide 2.. Part of the Sec protein translocase complex. Interacts with the SecYEG preprotein conducting channel. Has a central role in coupling the hydrolysis of ATP to the transfer of proteins into and across the cell membrane, serving as an ATP-driven molecular motor driving the stepwise translocation of polypeptide chains across the membrane. The protein is Protein translocase subunit SecA of Blochmanniella floridana.